Reading from the N-terminus, the 328-residue chain is Sin3 histone deacetylase corepressor complex component SDS3 (328 aa).

The segment at 1–64 (MSAAALLAPA…TDLAKHDEED (64 aa)) is disordered. Serine 2 bears the N-acetylserine mark. The tract at residues 2–170 (SAAALLAPAP…IENEKLTMEL (169 aa)) is mediates interaction with USP17L2. Residues 10–21 (APAPAGAPPAPE) show a composition bias toward pro residues. Composition is skewed to acidic residues over residues 23–37 (YPEEDEELESAEDDE) and 45–54 (SDEDTEDASE). A phosphoserine mark is found at serine 32 and serine 45. The residue at position 49 (threonine 49) is a Phosphothreonine. Serine 53 carries the post-translational modification Phosphoserine. Residues 64-171 (DFVEMKEQMY…ENEKLTMELT (108 aa)) are a coiled coil. Residues lysine 69, lysine 178, and lysine 201 each participate in a glycyl lysine isopeptide (Lys-Gly) (interchain with G-Cter in SUMO2) cross-link. Positions 226 to 252 (LKSPKRPASPSSPEHLPTTPAESPAQR) are disordered. 3 positions are modified to phosphoserine: serine 228, serine 234, and serine 237. Threonine 244 is modified (phosphothreonine).

It belongs to the SDS3 family. Homodimer. Component of the SIN3 histone deacetylase (HDAC) corepressor complex. Interacts with SIN3A. Interaction with SIN3B enhances the interaction between SIN3B and HDAC1 to form a complex. Interacts with HCFC1. Component of a mSin3A corepressor complex that contains SIN3A, SAP130, SUDS3/SAP45, ARID4B/SAP180, HDAC1 and HDAC2. Interacts with USP17L2; the interaction is direct. Interacts with FOXK2. Polyubiquitinated. 'Lys-63'-polyubiquitinated SUDS3 positively regulates histone deacetylation. Regulated through deubiquitination by USP17L2/USP17 that cleaves 'Lys-63'-linked ubiquitin chains.

It localises to the nucleus. Regulatory protein which represses transcription and augments histone deacetylase activity of HDAC1. May have a potential role in tumor suppressor pathways through regulation of apoptosis. May function in the assembly and/or enzymatic activity of the mSin3A corepressor complex or in mediating interactions between the complex and other regulatory complexes. The sequence is that of Sin3 histone deacetylase corepressor complex component SDS3 (SUDS3) from Bos taurus (Bovine).